We begin with the raw amino-acid sequence, 517 residues long: BTB/POZ domain-containing protein At3g49900 (517 aa).

Low complexity predominate over residues 28 to 37 (SSSSSSLSLS). The segment at 28 to 49 (SSSSSSLSLSPKQPINLSSSPS) is disordered. The segment covering 38-49 (PKQPINLSSSPS) has biased composition (polar residues). The 64-residue stretch at 67-130 (PDVFVNVGGT…CYGAHIELTP (64 aa)) folds into the BTB domain. The NPH3 domain maps to 224–307 (LPAGDFNVVA…VRAMLQEQLN (84 aa)). Residues 409 to 456 (ARSASFHCVHQPSNVNKTQRGDRGSVSNLSTTYRRRRASPPQAQPQKS) form a disordered region.

The protein belongs to the NPH3 family.

It participates in protein modification; protein ubiquitination. May act as a substrate-specific adapter of an E3 ubiquitin-protein ligase complex (CUL3-RBX1-BTB) which mediates the ubiquitination and subsequent proteasomal degradation of target proteins. This Arabidopsis thaliana (Mouse-ear cress) protein is BTB/POZ domain-containing protein At3g49900.